We begin with the raw amino-acid sequence, 126 residues long: Fatty acid-binding protein, liver (126 aa).

Residues T54 to N56, H99 to Q101, and R121 each bind cholate.

It belongs to the calycin superfamily. Fatty-acid binding protein (FABP) family.

Its subcellular location is the cytoplasm. In terms of biological role, FABPs are thought to play a role in the intracellular transport of long-chain fatty acids and their acyl-CoA esters. The polypeptide is Fatty acid-binding protein, liver (Anolis pulchellus (Common grass anole)).